Here is a 105-residue protein sequence, read N- to C-terminus: UPF0235 protein RP839 (105 aa).

The protein belongs to the UPF0235 family.

The polypeptide is UPF0235 protein RP839 (Rickettsia prowazekii (strain Madrid E)).